Consider the following 217-residue polypeptide: Ribonuclease HII (217 aa).

The RNase H type-2 domain maps to 12–201 (DLVAGVDEVG…VRTAHEARAA (190 aa)). A divalent metal cation-binding residues include Asp-18, Glu-19, and Asp-110.

It belongs to the RNase HII family. It depends on Mn(2+) as a cofactor. The cofactor is Mg(2+).

It is found in the cytoplasm. The catalysed reaction is Endonucleolytic cleavage to 5'-phosphomonoester.. Functionally, endonuclease that specifically degrades the RNA of RNA-DNA hybrids. The polypeptide is Ribonuclease HII (Pseudomonas syringae pv. tomato (strain ATCC BAA-871 / DC3000)).